The following is a 635-amino-acid chain: Threonine--tRNA ligase (635 aa).

In terms of domain architecture, TGS spans 1–58 (MIRVICDNETFELPTGSTAADFASKIKNSHYFAGVVINDQIKDLSTTLSEGDVLKFVT). The interval 237 to 528 (DHRVLGTKLD…LIEHFKGRFP (292 aa)) is catalytic. Cys328, His379, and His505 together coordinate Zn(2+).

The protein belongs to the class-II aminoacyl-tRNA synthetase family. In terms of assembly, homodimer. It depends on Zn(2+) as a cofactor.

Its subcellular location is the cytoplasm. The enzyme catalyses tRNA(Thr) + L-threonine + ATP = L-threonyl-tRNA(Thr) + AMP + diphosphate + H(+). Functionally, catalyzes the attachment of threonine to tRNA(Thr) in a two-step reaction: L-threonine is first activated by ATP to form Thr-AMP and then transferred to the acceptor end of tRNA(Thr). Also edits incorrectly charged L-seryl-tRNA(Thr). The sequence is that of Threonine--tRNA ligase from Chlamydia felis (strain Fe/C-56) (Chlamydophila felis).